A 348-amino-acid chain; its full sequence is Propane 2-monooxygenase, reductase component (348 aa).

A 2Fe-2S ferredoxin-type domain is found at 5–95; that stretch reads HKINFDPVDI…DCTIELLNFD (91 aa). Residues C39, C44, C47, and C79 each coordinate [2Fe-2S] cluster. Residues 105–206 form the FAD-binding FR-type domain; that stretch reads IQDVRTQVQA…TGPYGSFTLK (102 aa).

Belongs to the bacterial ring-hydroxylating dioxygenase ferredoxin reductase family. As to quaternary structure, the propane 2-monooxygenase multicomponent enzyme system is composed of an electron transfer component and a monooxygenase component interacting with the effector protein MimD. The electron transfer component is composed of a reductase (MimB), and the monooxygenase component is formed by a large subunit (MimA) and a small subunit (MimC). Requires FAD as cofactor. The cofactor is [2Fe-2S] cluster.

Reductase component of the propane 2-monooxygenase multicomponent enzyme system which is involved in the degradation of propane via the O2-dependent hydroxylation of propane. Reductase catalyzes the transfer of electrons from NADH or NADPH to monooxygenase. In Mycolicibacterium smegmatis (strain ATCC 700084 / mc(2)155) (Mycobacterium smegmatis), this protein is Propane 2-monooxygenase, reductase component.